We begin with the raw amino-acid sequence, 300 residues long: MELFLNLESRPGLIVICGPTATGKSGLAIALAEYLNTVILSADSRQVYKEFDIGTAKPTVQERQQVAHYLIDICEPTDNCTLAQYQEQANQLIQHFHQQGKTPLLVGGTGLYIQAVTEGLIIPRVAPQVELRSQLAQLAQTQLYAYLQQVDPVSAQRIHANDQVRTLRALEVYYVTGIPLSQQQGRNPPSYPICKIGLESEQLTHRIQQRTLQMLEKGWLAEVEFLLKQYGDDLPLLKTLGYAEMKQHIAGETSLEEAIQLTVLHTRQFAKRQRTWFRADAEITWLNGDDAQLLEKLQPG.

18-25 provides a ligand contact to ATP; the sequence is GPTATGKS. 20 to 25 lines the substrate pocket; that stretch reads TATGKS. The tract at residues 43-46 is interaction with substrate tRNA; that stretch reads DSRQ.

The protein belongs to the IPP transferase family. In terms of assembly, monomer. It depends on Mg(2+) as a cofactor.

It carries out the reaction adenosine(37) in tRNA + dimethylallyl diphosphate = N(6)-dimethylallyladenosine(37) in tRNA + diphosphate. Functionally, catalyzes the transfer of a dimethylallyl group onto the adenine at position 37 in tRNAs that read codons beginning with uridine, leading to the formation of N6-(dimethylallyl)adenosine (i(6)A). In Cyanothece sp. (strain PCC 7425 / ATCC 29141), this protein is tRNA dimethylallyltransferase.